The following is a 264-amino-acid chain: NFAT activation molecule 1 (264 aa).

Residues 1–37 form the signal peptide; that stretch reads MESWLLRRGARVRCLHPPSWLPAWCFLCLLPVPQTLQ. Residues 38 to 159 lie on the Extracellular side of the membrane; the sequence is LTGLVSLTHT…QPPAFKVQEA (122 aa). The Ig-like V-type domain maps to 49-145; the sequence is LPIMVSLANT…QSDGVVILVR (97 aa). Cysteines 64 and 110 form a disulfide. N-linked (GlcNAc...) asparagine glycans are attached at residues Asn105 and Asn118. Residues 160–180 form a helical membrane-spanning segment; that stretch reads LMLGFTSLMSVLGVLGTALLL. At 181-264 the chain is on the cytoplasmic side; that stretch reads WKKKQISVLG…NEFNLVYENL (84 aa). Positions 212-232 constitute an ITAM domain; it reads ESVYTSLQRRETEVYACMKEE. Phosphotyrosine occurs at positions 215 and 226.

No direct interaction with the B-cell antigen receptor (BCR). Interacts with SYK; probably involved in BCR signaling. Interacts with ZAP70. N-glycosylated. In terms of tissue distribution, highly expressed in the spleen, expressed by both B- and CD4+ and CD8+ T-cells, as well as non-T- and non-B-cells, including macrophages and neutrophils. Expressed at low levels, if any, in non-immune tissue.

It is found in the cell membrane. May function in immune system as a receptor which activates via the calcineurin/NFAT-signaling pathway the downstream cytokine gene promoters. Activates the transcription of IL-13 and TNF-alpha promoters. May be involved in the regulation of B-cell, but not T-cell, development. In Mus musculus (Mouse), this protein is NFAT activation molecule 1 (Nfam1).